Here is a 274-residue protein sequence, read N- to C-terminus: Phosphatidylglycerol--prolipoprotein diacylglyceryl transferase (274 aa).

Transmembrane regions (helical) follow at residues L22–A42, L61–Y81, I96–W116, F125–I145, S177–W197, G204–V224, and I238–V258. Residue R144 participates in a 1,2-diacyl-sn-glycero-3-phospho-(1'-sn-glycerol) binding.

This sequence belongs to the Lgt family.

It is found in the cell inner membrane. It carries out the reaction L-cysteinyl-[prolipoprotein] + a 1,2-diacyl-sn-glycero-3-phospho-(1'-sn-glycerol) = an S-1,2-diacyl-sn-glyceryl-L-cysteinyl-[prolipoprotein] + sn-glycerol 1-phosphate + H(+). It functions in the pathway protein modification; lipoprotein biosynthesis (diacylglyceryl transfer). Its function is as follows. Catalyzes the transfer of the diacylglyceryl group from phosphatidylglycerol to the sulfhydryl group of the N-terminal cysteine of a prolipoprotein, the first step in the formation of mature lipoproteins. In Aeromonas hydrophila subsp. hydrophila (strain ATCC 7966 / DSM 30187 / BCRC 13018 / CCUG 14551 / JCM 1027 / KCTC 2358 / NCIMB 9240 / NCTC 8049), this protein is Phosphatidylglycerol--prolipoprotein diacylglyceryl transferase.